A 298-amino-acid polypeptide reads, in one-letter code: Transcription factor SRM1 (298 aa).

The SANT domain maps to 7 to 62 (SDGSVWSREDDIAFERALANNTDESEERWEKIAADVPGKSVEQIKEHYELLVEDVT). Residues 68–118 (CVPLPAYGSPEGSNGHAGDEGASSKKGGNSHAGESNQAGKSKSDQERRKGI) form a disordered region. Basic and acidic residues predominate over residues 108-118 (SKSDQERRKGI). The 58-residue stretch at 111–168 (DQERRKGIAWTEDEHRLFLLGLDKYGKGDWRSISRNFVVTRTPTQVASHAQKYFIRLN) folds into the HTH myb-type domain. The H-T-H motif DNA-binding region spans 140–164 (WRSISRNFVVTRTPTQVASHAQKYF). Residues 182 to 200 (ITSVGNADVSTPQGPITGQ) are compositionally biased toward polar residues. The disordered stretch occupies residues 182–245 (ITSVGNADVS…GPPMYGTPAI (64 aa)). A compositionally biased stretch (low complexity) spans 201–215 (NNSNNNNNNNNNNSS).

Expressed in young seedlings, developing leaves, sepals and trichomes.

It localises to the nucleus. In terms of biological role, transcription activator that coordinates abscisic acid (ABA) biosynthesis and signaling-related genes via binding to the specific promoter motif 5'-(A/T)AACCAT-3'. Represses ABA-mediated salt (e.g. NaCl and KCl) stress tolerance. Regulates leaf shape and promotes vegetative growth. This Arabidopsis thaliana (Mouse-ear cress) protein is Transcription factor SRM1.